Consider the following 160-residue polypeptide: Transcription elongation factor GreA (160 aa).

Positions 50 to 70 (AAREQQSFNEGRIQELEAKLS) form a coiled coil.

Belongs to the GreA/GreB family.

Its function is as follows. Necessary for efficient RNA polymerase transcription elongation past template-encoded arresting sites. The arresting sites in DNA have the property of trapping a certain fraction of elongating RNA polymerases that pass through, resulting in locked ternary complexes. Cleavage of the nascent transcript by cleavage factors such as GreA or GreB allows the resumption of elongation from the new 3'terminus. GreA releases sequences of 2 to 3 nucleotides. This is Transcription elongation factor GreA from Legionella pneumophila (strain Corby).